The sequence spans 341 residues: Glycerol-3-phosphate dehydrogenase [NAD(P)+] (341 aa).

Ser14, Phe15, Arg35, and Lys108 together coordinate NADPH. Positions 108 and 136 each coordinate sn-glycerol 3-phosphate. Ser140 provides a ligand contact to NADPH. Sn-glycerol 3-phosphate-binding residues include Lys191, Asp244, Ser254, Arg255, and Asn256. Catalysis depends on Lys191, which acts as the Proton acceptor. Arg255 lines the NADPH pocket. Positions 279 and 281 each coordinate NADPH.

Belongs to the NAD-dependent glycerol-3-phosphate dehydrogenase family.

It localises to the cytoplasm. The catalysed reaction is sn-glycerol 3-phosphate + NAD(+) = dihydroxyacetone phosphate + NADH + H(+). It catalyses the reaction sn-glycerol 3-phosphate + NADP(+) = dihydroxyacetone phosphate + NADPH + H(+). Its pathway is membrane lipid metabolism; glycerophospholipid metabolism. Catalyzes the reduction of the glycolytic intermediate dihydroxyacetone phosphate (DHAP) to sn-glycerol 3-phosphate (G3P), the key precursor for phospholipid synthesis. In Pseudomonas putida (strain GB-1), this protein is Glycerol-3-phosphate dehydrogenase [NAD(P)+].